Reading from the N-terminus, the 371-residue chain is Leu/Ile/Val-binding protein homolog 1 (371 aa).

An N-terminal signal peptide occupies residues 1 to 23 (MRKTLFSGVALAAVIAFGGSAWA).

The protein belongs to the leucine-binding protein family.

Functionally, component of an amino-acid transport system. The protein is Leu/Ile/Val-binding protein homolog 1 of Brucella melitensis biotype 1 (strain ATCC 23456 / CCUG 17765 / NCTC 10094 / 16M).